Reading from the N-terminus, the 74-residue chain is Exodeoxyribonuclease 7 small subunit (74 aa).

The protein belongs to the XseB family. In terms of assembly, heterooligomer composed of large and small subunits.

It is found in the cytoplasm. It catalyses the reaction Exonucleolytic cleavage in either 5'- to 3'- or 3'- to 5'-direction to yield nucleoside 5'-phosphates.. Its function is as follows. Bidirectionally degrades single-stranded DNA into large acid-insoluble oligonucleotides, which are then degraded further into small acid-soluble oligonucleotides. The polypeptide is Exodeoxyribonuclease 7 small subunit (Neisseria meningitidis serogroup C / serotype 2a (strain ATCC 700532 / DSM 15464 / FAM18)).